The chain runs to 173 residues: Rubredoxin-2 (173 aa).

Rubredoxin-like domains are found at residues 2 to 53 (ASYK…FMLI) and 119 to 170 (YLKW…YVLY). Residues Cys6, Cys9, Cys39, Cys42, Cys124, Cys127, Cys157, and Cys160 each coordinate Fe cation.

This sequence belongs to the rubredoxin family. The cofactor is Fe(3+).

It is found in the cytoplasm. The protein operates within hydrocarbon metabolism; alkane degradation. Its function is as follows. Involved in the hydrocarbon hydroxylating system, which transfers electrons from NADH to rubredoxin reductase and then through rubredoxin to alkane 1 monooxygenase. The sequence is that of Rubredoxin-2 (alkG) from Ectopseudomonas oleovorans (Pseudomonas oleovorans).